We begin with the raw amino-acid sequence, 409 residues long: Small ribosomal subunit protein mS47 (409 aa).

The N-terminal 26 residues, 1–26, are a transit peptide targeting the mitochondrion; the sequence is MQTVKALRRVSEPLQWVRSVSYGRRF. The segment at 388-409 is disordered; it reads ASELDDSDSELKLPTAQREPYF.

Belongs to the enoyl-CoA hydratase/isomerase family. Mitochondrion-specific ribosomal protein mS47 subfamily. Component of the mitochondrial ribosome small subunit.

The protein resides in the mitochondrion. This Arabidopsis thaliana (Mouse-ear cress) protein is Small ribosomal subunit protein mS47.